The primary structure comprises 250 residues: Coproheme decarboxylase (250 aa).

Fe-coproporphyrin III is bound by residues R131, 145–149, H172, and Q185; that span reads YPMNK. The active site involves Y145.

This sequence belongs to the ChdC family. Type 1 subfamily. It depends on Fe-coproporphyrin III as a cofactor.

The enzyme catalyses Fe-coproporphyrin III + 2 H2O2 + 2 H(+) = heme b + 2 CO2 + 4 H2O. It catalyses the reaction Fe-coproporphyrin III + H2O2 + H(+) = harderoheme III + CO2 + 2 H2O. The catalysed reaction is harderoheme III + H2O2 + H(+) = heme b + CO2 + 2 H2O. It participates in porphyrin-containing compound metabolism; protoheme biosynthesis. Involved in coproporphyrin-dependent heme b biosynthesis. Catalyzes the decarboxylation of Fe-coproporphyrin III (coproheme) to heme b (protoheme IX), the last step of the pathway. The reaction occurs in a stepwise manner with a three-propionate intermediate. The polypeptide is Coproheme decarboxylase (Staphylococcus aureus (strain Mu50 / ATCC 700699)).